A 160-amino-acid polypeptide reads, in one-letter code: Sulfur-rich protein (160 aa).

Helical transmembrane passes span 63–83 (ITMIVLGIILLIAGLALTFVL) and 92–112 (FLFLIPAVIGLVKLLATSVFM).

Its subcellular location is the membrane. The sequence is that of Sulfur-rich protein (srp) from Chlamydia abortus (strain DSM 27085 / S26/3) (Chlamydophila abortus).